Consider the following 180-residue polypeptide: Large ribosomal subunit protein uL5 (180 aa).

The protein belongs to the universal ribosomal protein uL5 family. In terms of assembly, part of the 50S ribosomal subunit; part of the 5S rRNA/L5/L18/L25 subcomplex. Contacts the 5S rRNA and the P site tRNA. Forms a bridge to the 30S subunit in the 70S ribosome.

Its function is as follows. This is one of the proteins that bind and probably mediate the attachment of the 5S RNA into the large ribosomal subunit, where it forms part of the central protuberance. In the 70S ribosome it contacts protein S13 of the 30S subunit (bridge B1b), connecting the 2 subunits; this bridge is implicated in subunit movement. Contacts the P site tRNA; the 5S rRNA and some of its associated proteins might help stabilize positioning of ribosome-bound tRNAs. This is Large ribosomal subunit protein uL5 from Streptococcus pneumoniae (strain JJA).